We begin with the raw amino-acid sequence, 184 residues long: ATP synthase subunit b, chloroplastic (184 aa).

The helical transmembrane segment at 27-49 threads the bilayer; that stretch reads LATNPINLSVVLGVLIFFGKGVL.

Belongs to the ATPase B chain family. As to quaternary structure, F-type ATPases have 2 components, F(1) - the catalytic core - and F(0) - the membrane proton channel. F(1) has five subunits: alpha(3), beta(3), gamma(1), delta(1), epsilon(1). F(0) has four main subunits: a(1), b(1), b'(1) and c(10-14). The alpha and beta chains form an alternating ring which encloses part of the gamma chain. F(1) is attached to F(0) by a central stalk formed by the gamma and epsilon chains, while a peripheral stalk is formed by the delta, b and b' chains.

It is found in the plastid. The protein localises to the chloroplast thylakoid membrane. F(1)F(0) ATP synthase produces ATP from ADP in the presence of a proton or sodium gradient. F-type ATPases consist of two structural domains, F(1) containing the extramembraneous catalytic core and F(0) containing the membrane proton channel, linked together by a central stalk and a peripheral stalk. During catalysis, ATP synthesis in the catalytic domain of F(1) is coupled via a rotary mechanism of the central stalk subunits to proton translocation. Functionally, component of the F(0) channel, it forms part of the peripheral stalk, linking F(1) to F(0). In Chloranthus spicatus (Chulantree), this protein is ATP synthase subunit b, chloroplastic.